We begin with the raw amino-acid sequence, 140 residues long: NADH-quinone oxidoreductase subunit I (140 aa).

2 4Fe-4S ferredoxin-type domains span residues 42-71 (GSFTLHSEKCIACGLCQQACPNKVIKVGSI) and 81-110 (ASYEMEMKYCLFCGLCVEACPTNALVFNQE). Cys51, Cys54, Cys57, Cys61, Cys90, Cys93, Cys96, and Cys100 together coordinate [4Fe-4S] cluster.

The protein belongs to the complex I 23 kDa subunit family. NDH-1 is composed of 14 different subunits. Subunits NuoA, H, J, K, L, M, N constitute the membrane sector of the complex. [4Fe-4S] cluster serves as cofactor.

It is found in the cell membrane. The catalysed reaction is a quinone + NADH + 5 H(+)(in) = a quinol + NAD(+) + 4 H(+)(out). Functionally, NDH-1 shuttles electrons from NADH, via FMN and iron-sulfur (Fe-S) centers, to quinones in the respiratory chain. The immediate electron acceptor for the enzyme in this species is believed to be ubiquinone. Couples the redox reaction to proton translocation (for every two electrons transferred, four hydrogen ions are translocated across the cytoplasmic membrane), and thus conserves the redox energy in a proton gradient. The chain is NADH-quinone oxidoreductase subunit I from Carboxydothermus hydrogenoformans (strain ATCC BAA-161 / DSM 6008 / Z-2901).